A 136-amino-acid chain; its full sequence is Replication enhancer (136 aa).

This sequence belongs to the geminiviridae replication enhancer protein family. As to quaternary structure, homooligomer. Interacts with the replication-associated protein (REP). Interacts with host proliferating cell nuclear antigen (PCNA). Interacts with host retinoblastoma-related protein 1 (RBR1), and may thereby deregulate the host cell cycle. Oligomerization and interaction with PCNA are necessary for optimal replication enhancement.

Increases viral DNA accumulation. Enhances infectivity and symptom expression. The polypeptide is Replication enhancer (Beet curly top virus (strain California/Logan) (BCTV)).